The primary structure comprises 234 residues: BTB/POZ domain-containing protein KCTD5 (234 aa).

Ala2 carries the post-translational modification N-acetylalanine. The residue at position 10 (Ser10) is a Phosphoserine. A BTB domain is found at 44-146 (KWVRLNVGGT…LVKDKIRERD (103 aa)). Residues 213–234 (PYGTASEPSEKAKILQERGSRM) form a disordered region. Positions 220–234 (PSEKAKILQERGSRM) are enriched in basic and acidic residues.

In terms of assembly, homopentamer. Interacts (via C-terminus) with GRASP55/GORASP2. Interacts with CUL3 and with ubiquitinated proteins. Interacts with CRY1. As to quaternary structure, (Microbial infection) Interacts with adeno-associated virus 2 (AAV-2) REP proteins.

Its subcellular location is the cytoplasm. It localises to the cytosol. The protein resides in the nucleus. Functionally, its interaction with CUL3 suggests that it may act as a substrate adapter in some E3 ligase complex. Does not affect the function of Kv channel Kv2.1/KCNB1, Kv1.2/KCNA2, Kv4.2/KCND2 and Kv3.4/KCNC4. This Homo sapiens (Human) protein is BTB/POZ domain-containing protein KCTD5 (KCTD5).